The following is a 249-amino-acid chain: Triosephosphate isomerase (249 aa).

Substrate-binding residues include Asn12 and Lys14. Lys14 is modified (N6-acetyllysine). Tyr68 carries the 3'-nitrotyrosine modification. Residue Ser80 is modified to Phosphoserine. His96 serves as the catalytic Electrophile. Ser106 is subject to Phosphoserine. Lys142 participates in a covalent cross-link: Glycyl lysine isopeptide (Lys-Gly) (interchain with G-Cter in SUMO1). Position 149 is an N6-succinyllysine (Lys149). Residue Lys156 is modified to N6-acetyllysine; alternate. Lys156 bears the N6-succinyllysine; alternate mark. Ser159 is modified (phosphoserine). Glu166 serves as the catalytic Proton acceptor. Residue Thr173 is modified to Phosphothreonine. Lys194 is modified (N6-acetyllysine; alternate). At Lys194 the chain carries N6-succinyllysine; alternate. At Lys194 the chain carries N6-methyllysine; alternate. Ser198 carries the phosphoserine modification. The residue at position 209 (Tyr209) is a 3'-nitrotyrosine. Ser212 is modified (phosphoserine). Phosphothreonine is present on Thr214. Ser223 is modified (phosphoserine). Position 238 is an N6-acetyllysine (Lys238).

This sequence belongs to the triosephosphate isomerase family. Homodimer.

The protein resides in the cytoplasm. It catalyses the reaction dihydroxyacetone phosphate = methylglyoxal + phosphate. The enzyme catalyses D-glyceraldehyde 3-phosphate = dihydroxyacetone phosphate. It functions in the pathway carbohydrate degradation; glycolysis; D-glyceraldehyde 3-phosphate from glycerone phosphate: step 1/1. Its pathway is carbohydrate biosynthesis; gluconeogenesis. Triosephosphate isomerase is an extremely efficient metabolic enzyme that catalyzes the interconversion between dihydroxyacetone phosphate (DHAP) and D-glyceraldehyde-3-phosphate (G3P) in glycolysis and gluconeogenesis. In terms of biological role, it is also responsible for the non-negligible production of methylglyoxal a reactive cytotoxic side-product that modifies and can alter proteins, DNA and lipids. This Bos taurus (Bovine) protein is Triosephosphate isomerase (TPI1).